The primary structure comprises 947 residues: Regulator of spindle assembly protein 2 (947 aa).

Disordered stretches follow at residues 20-148 (EKPA…LSEQ) and 173-211 (SPHEARQQTIQESSEQLEPRAKVTRSSSQPPPIDTLKPR). Basic and acidic residues-rich tracts occupy residues 30–50 (PKYRDHHEKIRNKENMEEGEK) and 62–84 (TREDYERYDEDRRLKDKARDLRI). 2 stretches are compositionally biased toward polar residues: residues 90-102 (SATPEASPSSDQY) and 179-188 (QQTIQESSEQ). Residues 276–320 (IIAEEAKKRRNEAEAVRKLIEVETQNAKKRAVIQELKDRIDKLTQ) are a coiled coil. Disordered stretches follow at residues 407-453 (KINP…RRIG), 575-594 (ERESMEAQESESESMELEIP), 600-662 (SVTT…GLII), and 681-705 (EQSLEEELEPRGNNDSADDSGFLLD). A compositionally biased stretch (low complexity) spans 411–422 (SSQLNQQSSSDA). Residues 430 to 449 (EASTQMTSRLAESAMTQTSP) are compositionally biased toward polar residues. Positions 563–591 (AGLSHYLEQVKKERESMEAQESESESMEL) form a coiled coil. Residues 580–590 (EAQESESESME) show a composition bias toward acidic residues. Over residues 645–657 (FEHEIEEHKEPEK) the composition is skewed to basic and acidic residues.

Interacts with phosphatase regulatory subunit rsa-1 and tpxl-1. May interact with spd-5. May interact with sys-1.

Its subcellular location is the cytoplasm. The protein localises to the cytoskeleton. It is found in the microtubule organizing center. It localises to the centrosome. In terms of biological role, recruits rsa-1 and, thereby, phosphatase let-92/paa-1 complex to the centrosomes. Recruits sys-1/beta-catenin to mitotic centrosomes during the first embryonic cell divisions. The chain is Regulator of spindle assembly protein 2 from Caenorhabditis elegans.